Reading from the N-terminus, the 391-residue chain is Nuclear hormone receptor family member nhr-218 (391 aa).

Residues 17–93 constitute a DNA-binding region (nuclear receptor); it reads PIPCQICTYQ…MGMKAEKIQQ (77 aa). 2 NR C4-type zinc fingers span residues 20–40 and 56–76; these read CQICTYQSHGVNFNVMTCRAC and CKTRKNDCRIDSTERHFCRLC. One can recognise an NR LBD domain in the interval 146-391; the sequence is SRNYSDSPLT…DNFCNLFAMK (246 aa).

This sequence belongs to the nuclear hormone receptor family.

The protein resides in the nucleus. Its function is as follows. Orphan nuclear receptor. The protein is Nuclear hormone receptor family member nhr-218 (nhr-218) of Caenorhabditis elegans.